The following is a 364-amino-acid chain: UDP-N-acetylglucosamine--N-acetylmuramyl-(pentapeptide) pyrophosphoryl-undecaprenol N-acetylglucosamine transferase (364 aa).

Residues 19-21 (TGG), Asn131, Arg167, Ser195, Ile250, and Gln295 contribute to the UDP-N-acetyl-alpha-D-glucosamine site.

It belongs to the glycosyltransferase 28 family. MurG subfamily.

It is found in the cell inner membrane. The catalysed reaction is di-trans,octa-cis-undecaprenyl diphospho-N-acetyl-alpha-D-muramoyl-L-alanyl-D-glutamyl-meso-2,6-diaminopimeloyl-D-alanyl-D-alanine + UDP-N-acetyl-alpha-D-glucosamine = di-trans,octa-cis-undecaprenyl diphospho-[N-acetyl-alpha-D-glucosaminyl-(1-&gt;4)]-N-acetyl-alpha-D-muramoyl-L-alanyl-D-glutamyl-meso-2,6-diaminopimeloyl-D-alanyl-D-alanine + UDP + H(+). It functions in the pathway cell wall biogenesis; peptidoglycan biosynthesis. In terms of biological role, cell wall formation. Catalyzes the transfer of a GlcNAc subunit on undecaprenyl-pyrophosphoryl-MurNAc-pentapeptide (lipid intermediate I) to form undecaprenyl-pyrophosphoryl-MurNAc-(pentapeptide)GlcNAc (lipid intermediate II). The chain is UDP-N-acetylglucosamine--N-acetylmuramyl-(pentapeptide) pyrophosphoryl-undecaprenol N-acetylglucosamine transferase from Xylella fastidiosa (strain Temecula1 / ATCC 700964).